We begin with the raw amino-acid sequence, 161 residues long: Ribonuclease P protein component 2 (161 aa).

The protein belongs to the eukaryotic/archaeal RNase P protein component 2 family. In terms of assembly, consists of a catalytic RNA component and at least 4-5 protein subunits.

The protein localises to the cytoplasm. It carries out the reaction Endonucleolytic cleavage of RNA, removing 5'-extranucleotides from tRNA precursor.. In terms of biological role, part of ribonuclease P, a protein complex that generates mature tRNA molecules by cleaving their 5'-ends. In Methanopyrus kandleri (strain AV19 / DSM 6324 / JCM 9639 / NBRC 100938), this protein is Ribonuclease P protein component 2.